The sequence spans 191 residues: Molybdenum cofactor guanylyltransferase (191 aa).

Residues 13 to 15 (LAG), Lys26, Asp72, and Asp102 contribute to the GTP site. Asp102 is a binding site for Mg(2+).

It belongs to the MobA family. In terms of assembly, monomer. It depends on Mg(2+) as a cofactor.

It is found in the cytoplasm. The catalysed reaction is Mo-molybdopterin + GTP + H(+) = Mo-molybdopterin guanine dinucleotide + diphosphate. Functionally, transfers a GMP moiety from GTP to Mo-molybdopterin (Mo-MPT) cofactor (Moco or molybdenum cofactor) to form Mo-molybdopterin guanine dinucleotide (Mo-MGD) cofactor. The protein is Molybdenum cofactor guanylyltransferase of Pseudomonas putida (strain GB-1).